The sequence spans 78 residues: uncharacterized protein (78 aa).

This is an uncharacterized protein from Escherichia coli (strain K12).